The sequence spans 486 residues: NGFI-A-binding protein 1 (486 aa).

The interval 4 to 82 is NCD1; it reads ALPRTLGELQ…RDWVTNPGLF (79 aa). Glycyl lysine isopeptide (Lys-Gly) (interchain with G-Cter in SUMO2) cross-links involve residues lysine 126, lysine 129, and lysine 143. The tract at residues 160 to 187 is disordered; the sequence is WQGHHATESEHSLSPADLGSPASPKESS. Phosphoserine is present on residues serine 171 and serine 182. A Glycyl lysine isopeptide (Lys-Gly) (interchain with G-Cter in SUMO2) cross-link involves residue lysine 211. Residues 220-309 form an NCD2 region; that stretch reads LLKNNKKLAK…ARQVSREVTY (90 aa). Residues 306–337 form a necessary for nuclear localization region; sequence EVTYKYTYRTTRLKCGERDELSPKRIKIEDGF. The residue at position 327 (serine 327) is a Phosphoserine. A Glycyl lysine isopeptide (Lys-Gly) (interchain with G-Cter in SUMO1); alternate cross-link involves residue lysine 332. Lysine 332 is covalently cross-linked (Glycyl lysine isopeptide (Lys-Gly) (interchain with G-Cter in SUMO2); alternate). Residues lysine 354, lysine 368, and lysine 372 each participate in a glycyl lysine isopeptide (Lys-Gly) (interchain with G-Cter in SUMO2) cross-link. Positions 398–438 are disordered; the sequence is RQSSGEQSPDGGLPSDSSDGQGERPLNLRIPSVQNRQPHHF. A compositionally biased stretch (low complexity) spans 404-417; it reads QSPDGGLPSDSSDG. Position 405 is a phosphoserine (serine 405). Residues lysine 453, lysine 464, and lysine 476 each participate in a glycyl lysine isopeptide (Lys-Gly) (interchain with G-Cter in SUMO2) cross-link. Lysine 479 participates in a covalent cross-link: Glycyl lysine isopeptide (Lys-Gly) (interchain with G-Cter in SUMO1); alternate. A Glycyl lysine isopeptide (Lys-Gly) (interchain with G-Cter in SUMO2); alternate cross-link involves residue lysine 479.

The protein belongs to the NAB family. As to quaternary structure, homomultimers may associate with EGR1 bound to DNA. In terms of tissue distribution, widely expressed in adult. In day 16 embryo highest levels in forebrain, thymus, salivary gland and cartilage.

It is found in the nucleus. Functionally, acts as a transcriptional repressor for zinc finger transcription factors EGR1 and EGR2. The chain is NGFI-A-binding protein 1 (Nab1) from Mus musculus (Mouse).